Reading from the N-terminus, the 129-residue chain is Small ribosomal subunit protein uS11 (129 aa).

This sequence belongs to the universal ribosomal protein uS11 family. Part of the 30S ribosomal subunit. Interacts with proteins S7 and S18. Binds to IF-3.

Its function is as follows. Located on the platform of the 30S subunit, it bridges several disparate RNA helices of the 16S rRNA. Forms part of the Shine-Dalgarno cleft in the 70S ribosome. This chain is Small ribosomal subunit protein uS11, found in Halalkalibacterium halodurans (strain ATCC BAA-125 / DSM 18197 / FERM 7344 / JCM 9153 / C-125) (Bacillus halodurans).